Reading from the N-terminus, the 208-residue chain is Ras-related protein Rab-6A (208 aa).

The residue at position 2 (Ser2) is an N-acetylserine. Residues Ser23, Val24, Gly25, Lys26, Thr27, Ser28, Asp39, Asn40, Tyr42, and Thr45 each coordinate GTP. Thr27 lines the Mg(2+) pocket. Residues 32 to 50 (RFMYDSFDNTYQATIGIDF) carry the Switch 1 motif. Mg(2+) contacts are provided by Thr45 and Asp68. The Switch 2 signature appears at 69 to 88 (TAGQERFRSLIPSYIRDSTV). Position 71 (Gly71) interacts with GTP. Tyr82 carries the O-AMP-tyrosine; by Legionella DrrA modification. GTP-binding residues include Asn126, Lys127, Asp129, Ser156, Ala157, and Lys158. Ser184 carries the post-translational modification Phosphoserine. 2 S-geranylgeranyl cysteine lipidation sites follow: Cys206 and Cys208. Residue Cys208 is modified to Cysteine methyl ester.

The protein belongs to the small GTPase superfamily. Rab family. Interacts (GTP-bound) with DYNLRB1; the interaction is direct. Interacts with BICD1. Interacts with BICD2; the interaction is direct. Interacts (GTP-bound) with VPS13B. As to quaternary structure, interacts with BICD1. Interacts (GDP-bound) with DYNLRB1; the interaction is direct. Interacts (GTP-bound) with VPS13B. In terms of assembly, interacts with BICDL1; leads to its accumulation in the pericentrosomal region. Interacts with SCYL1BP1. Interacts with VSP52. Interacts with RABGAP1. Interacts with GCC2 (via its GRIP domain). Interacts with RAB6IP1 (via its RUN 1 domain). Interacts with TMF1. Interacts with CIMAP3. Interacts (GTP-bound) with APBA1/MINT1 isoform 2, also called Mint1_826, but not with isoform 1. Interacts with RIC1; the interaction is direct with a preference for RAB6A-GDP. Interacts with RGP1; the interaction is direct with a preference for RAB6A-GDP. (Microbial infection) Interacts with human cytomegalovirus protein UL32. It depends on Mg(2+) as a cofactor. In terms of processing, prenylated. As to expression, ubiquitous.

Its subcellular location is the golgi apparatus membrane. It is found in the cytoplasmic vesicle. The protein localises to the secretory vesicle. The protein resides in the acrosome membrane. The enzyme catalyses GTP + H2O = GDP + phosphate + H(+). Its activity is regulated as follows. Regulated by guanine nucleotide exchange factors (GEFs) which promote the exchange of bound GDP for free GTP. Regulated by GTPase activating proteins (GAPs) which increase the GTP hydrolysis activity. Inhibited by GDP dissociation inhibitors (GDIs). In terms of biological role, the small GTPases Rab are key regulators of intracellular membrane trafficking, from the formation of transport vesicles to their fusion with membranes. Rabs cycle between an inactive GDP-bound form and an active GTP-bound form that is able to recruit to membranes different sets of downstream effectors directly responsible for vesicle formation, movement, tethering and fusion. RAB6A acts as a regulator of COPI-independent retrograde transport from the Golgi apparatus towards the endoplasmic reticulum (ER). Has a low GTPase activity. Recruits VPS13B to the Golgi membrane. Plays a role in neuron projection development. In Homo sapiens (Human), this protein is Ras-related protein Rab-6A.